Reading from the N-terminus, the 808-residue chain is ATP-dependent RNA helicase dbp4 (808 aa).

The segment at 1–20 (MAPPSVGRKSKNISKGKVDA) is disordered. A Q motif motif is present at residues 49–77 (KNFSELPLSGPTSSGLEASHFKTLTDVQS). One can recognise a Helicase ATP-binding domain in the interval 80–254 (VPLALKGKDI…RLSLKEPEYV (175 aa)). 93–100 (AKTGSGKT) is a binding site for ATP. A DEAD box motif is present at residues 202–205 (DEAD). In terms of domain architecture, Helicase C-terminal spans 280-439 (KLNTLFGFIR…DIKNQLQNMC (160 aa)). Disordered stretches follow at residues 491–535 (IKFQ…KYDR), 555–620 (DDTP…GISK), and 654–795 (EEGN…EPET). Over residues 519–535 (TEKKPKKKDEVRTKYDR) the composition is skewed to basic and acidic residues. Composition is skewed to acidic residues over residues 564-573 (GTADADEDND) and 584-605 (DNDDTSDDEDDDDDDDDDDDDV). Basic and acidic residues predominate over residues 670-705 (FRAKGTAEEQRAKFLEEEAERVREADLLDKQTAKDK). Residues 720-739 (LDDDDEEALELVDAGDDEDP) show a composition bias toward acidic residues. The segment covering 767–778 (KWFEDDSDDERK) has biased composition (basic and acidic residues).

Belongs to the DEAD box helicase family. DDX10/DBP4 subfamily. Interacts with the U3 and U14 snoRNAs. Associates with pre-ribosomal complexes.

Its subcellular location is the nucleus. The protein resides in the nucleolus. The enzyme catalyses ATP + H2O = ADP + phosphate + H(+). Its function is as follows. ATP-dependent RNA helicase required for ribosome biogenesis. Involved in the release of U14 snoRNA in pre-ribosomal complexes. Required for pre-rRNA cleavage at site A2. The polypeptide is ATP-dependent RNA helicase dbp4 (dbp4) (Sclerotinia sclerotiorum (strain ATCC 18683 / 1980 / Ss-1) (White mold)).